We begin with the raw amino-acid sequence, 465 residues long: A-type ATP synthase subunit B (465 aa).

It belongs to the ATPase alpha/beta chains family. The A-type ATPase is composed of subunits A(3), B(3), C, D, E(1 or 2), F, H(2), I and proteolipid K(x).

The protein localises to the cell membrane. Its function is as follows. Component of the A-type ATP synthase that produces ATP from ADP in the presence of a proton gradient across the membrane. The B chain is a regulatory subunit. The protein is A-type ATP synthase subunit B of Methanocaldococcus jannaschii (strain ATCC 43067 / DSM 2661 / JAL-1 / JCM 10045 / NBRC 100440) (Methanococcus jannaschii).